Here is a 274-residue protein sequence, read N- to C-terminus: Thiazole synthase (274 aa).

Residue K115 is the Schiff-base intermediate with DXP of the active site. Residues G176, 202–203 (AG), and 224–225 (NS) contribute to the 1-deoxy-D-xylulose 5-phosphate site.

It belongs to the ThiG family. Homotetramer. Forms heterodimers with either ThiH or ThiS.

It is found in the cytoplasm. The enzyme catalyses [ThiS sulfur-carrier protein]-C-terminal-Gly-aminoethanethioate + 2-iminoacetate + 1-deoxy-D-xylulose 5-phosphate = [ThiS sulfur-carrier protein]-C-terminal Gly-Gly + 2-[(2R,5Z)-2-carboxy-4-methylthiazol-5(2H)-ylidene]ethyl phosphate + 2 H2O + H(+). It functions in the pathway cofactor biosynthesis; thiamine diphosphate biosynthesis. In terms of biological role, catalyzes the rearrangement of 1-deoxy-D-xylulose 5-phosphate (DXP) to produce the thiazole phosphate moiety of thiamine. Sulfur is provided by the thiocarboxylate moiety of the carrier protein ThiS. In vitro, sulfur can be provided by H(2)S. This chain is Thiazole synthase, found in Psychrobacter arcticus (strain DSM 17307 / VKM B-2377 / 273-4).